A 288-amino-acid polypeptide reads, in one-letter code: Pyridoxal kinase PdxY (288 aa).

Residues Ser-12 and 47–48 each bind substrate; that span reads TQ. ATP-binding positions include Asp-114, Glu-151, Lys-184, and 211–214; that span reads RPLL. Residue Asp-225 participates in substrate binding.

The protein belongs to the pyridoxine kinase family. PdxY subfamily. Homodimer. The cofactor is Mg(2+).

It carries out the reaction pyridoxal + ATP = pyridoxal 5'-phosphate + ADP + H(+). Its pathway is cofactor metabolism; pyridoxal 5'-phosphate salvage; pyridoxal 5'-phosphate from pyridoxal: step 1/1. Its function is as follows. Pyridoxal kinase involved in the salvage pathway of pyridoxal 5'-phosphate (PLP). Catalyzes the phosphorylation of pyridoxal to PLP. In Pseudomonas savastanoi pv. phaseolicola (strain 1448A / Race 6) (Pseudomonas syringae pv. phaseolicola (strain 1448A / Race 6)), this protein is Pyridoxal kinase PdxY.